We begin with the raw amino-acid sequence, 71 residues long: MDLNLRHAVIQNIANNTKEQLEDTIVDAIQRGEEKYLPGLGVLFEEIWKHSSEQQKEEMLTTLEQAVKQHA.

The protein belongs to the SspI family.

The protein resides in the spore core. The protein is Small, acid-soluble spore protein I of Geobacillus sp. (strain WCH70).